A 452-amino-acid chain; its full sequence is Mitochondrial import inner membrane translocase subunit TIM44 (452 aa).

Thr-128 bears the Phosphothreonine mark. 166-173 (SGEKLGKT) provides a ligand contact to ATP. Lys-177 bears the N6-succinyllysine mark. Position 180 is a phosphoserine (Ser-180). Lys-217 carries the post-translational modification N6-succinyllysine.

Belongs to the Tim44 family. Probable component of the PAM complex at least composed of a mitochondrial HSP70 protein, GRPEL1 or GRPEL2, TIMM44, TIMM16/PAM16 and TIMM14/DNAJC19. The complex interacts with the TIMM23 component of the TIM23 complex. Interacts with SLC25A4/ANT1 and SLC25A5/ANT2; leading to inhibit the presequence translocase TIMM23, thereby promoting stabilization of PINK1.

Its subcellular location is the mitochondrion inner membrane. Essential component of the PAM complex, a complex required for the translocation of transit peptide-containing proteins from the inner membrane into the mitochondrial matrix in an ATP-dependent manner. Recruits mitochondrial HSP70 to drive protein translocation into the matrix using ATP as an energy source. The protein is Mitochondrial import inner membrane translocase subunit TIM44 (Timm44) of Mus musculus (Mouse).